Here is a 616-residue protein sequence, read N- to C-terminus: Homeodomain-interacting protein kinase 4 (616 aa).

Residues 11 to 347 (YDIIEVLGKG…PSAALRHPFV (337 aa)) enclose the Protein kinase domain. ATP-binding positions include 17–25 (LGKGTFGEV) and lysine 40. The active-site Proton acceptor is the aspartate 136. Residues 485–616 (RHKARKPPAG…SFLQHVTGHH (132 aa)) are disordered. Residues 496–511 (KSDSNLSNLIRLSQVS) show a composition bias toward polar residues. Serine 511 carries the phosphoserine modification.

The protein belongs to the protein kinase superfamily. CMGC Ser/Thr protein kinase family. HIPK subfamily. Post-translationally, autophosphorylated.

It is found in the cytoplasm. The enzyme catalyses L-seryl-[protein] + ATP = O-phospho-L-seryl-[protein] + ADP + H(+). The catalysed reaction is L-threonyl-[protein] + ATP = O-phospho-L-threonyl-[protein] + ADP + H(+). Its function is as follows. Protein kinase that phosphorylates TP53, and thus induces TP53 repression of BIRC5 promoter. May act as a corepressor of transcription factors (Potential). The chain is Homeodomain-interacting protein kinase 4 (HIPK4) from Macaca fascicularis (Crab-eating macaque).